The primary structure comprises 91 residues: Small ribosomal subunit protein uS19 (91 aa).

Belongs to the universal ribosomal protein uS19 family.

Protein S19 forms a complex with S13 that binds strongly to the 16S ribosomal RNA. The sequence is that of Small ribosomal subunit protein uS19 from Prochlorococcus marinus (strain SARG / CCMP1375 / SS120).